The sequence spans 429 residues: Glutamate-1-semialdehyde 2,1-aminomutase 1 (429 aa).

K268 bears the N6-(pyridoxal phosphate)lysine mark.

It belongs to the class-III pyridoxal-phosphate-dependent aminotransferase family. HemL subfamily. In terms of assembly, homodimer. The cofactor is pyridoxal 5'-phosphate.

The protein localises to the cytoplasm. It carries out the reaction (S)-4-amino-5-oxopentanoate = 5-aminolevulinate. The protein operates within porphyrin-containing compound metabolism; protoporphyrin-IX biosynthesis; 5-aminolevulinate from L-glutamyl-tRNA(Glu): step 2/2. This Staphylococcus haemolyticus (strain JCSC1435) protein is Glutamate-1-semialdehyde 2,1-aminomutase 1.